A 445-amino-acid polypeptide reads, in one-letter code: tRNA modification GTPase MnmE (445 aa).

The (6S)-5-formyl-5,6,7,8-tetrahydrofolate site is built by Arg-20, Glu-79, and Lys-119. A TrmE-type G domain is found at 215–371 (GLKLAIIGPP…ILKNIEEIAE (157 aa)). Position 225 (Asn-225) interacts with K(+). Residues 225 to 230 (NAGKSS), 244 to 250 (SNIAGTT), and 269 to 272 (DTAG) each bind GTP. Ser-229 provides a ligand contact to Mg(2+). Residues Ser-244, Ile-246, and Thr-249 each contribute to the K(+) site. Thr-250 contacts Mg(2+). Lys-445 serves as a coordination point for (6S)-5-formyl-5,6,7,8-tetrahydrofolate.

Belongs to the TRAFAC class TrmE-Era-EngA-EngB-Septin-like GTPase superfamily. TrmE GTPase family. As to quaternary structure, homodimer. Heterotetramer of two MnmE and two MnmG subunits. Requires K(+) as cofactor.

It is found in the cytoplasm. In terms of biological role, exhibits a very high intrinsic GTPase hydrolysis rate. Involved in the addition of a carboxymethylaminomethyl (cmnm) group at the wobble position (U34) of certain tRNAs, forming tRNA-cmnm(5)s(2)U34. The protein is tRNA modification GTPase MnmE of Rickettsia bellii (strain RML369-C).